We begin with the raw amino-acid sequence, 395 residues long: F-box only protein 7 (395 aa).

The 52-residue stretch at 19–70 (NHDWSKLCPDILRKIIESLSSLDFYRAKIVCSDWYSVWKTCVKRPLRPWRII) folds into the F-box domain.

The polypeptide is F-box only protein 7 (FBX7) (Arabidopsis thaliana (Mouse-ear cress)).